The sequence spans 120 residues: Aspartate 1-decarboxylase (120 aa).

Serine 25 acts as the Schiff-base intermediate with substrate; via pyruvic acid in catalysis. Serine 25 carries the post-translational modification Pyruvic acid (Ser). Threonine 57 contacts substrate. Catalysis depends on tyrosine 58, which acts as the Proton donor. 73–75 is a substrate binding site; it reads GAA.

It belongs to the PanD family. As to quaternary structure, heterooctamer of four alpha and four beta subunits. Pyruvate serves as cofactor. Post-translationally, is synthesized initially as an inactive proenzyme, which is activated by self-cleavage at a specific serine bond to produce a beta-subunit with a hydroxyl group at its C-terminus and an alpha-subunit with a pyruvoyl group at its N-terminus.

Its subcellular location is the cytoplasm. It carries out the reaction L-aspartate + H(+) = beta-alanine + CO2. It participates in cofactor biosynthesis; (R)-pantothenate biosynthesis; beta-alanine from L-aspartate: step 1/1. Functionally, catalyzes the pyruvoyl-dependent decarboxylation of aspartate to produce beta-alanine. The protein is Aspartate 1-decarboxylase of Thermosipho africanus (strain TCF52B).